A 1107-amino-acid polypeptide reads, in one-letter code: Copine family protein 1 (1107 aa).

Residues 1-22 are Extracellular-facing; that stretch reads MVFDARLGYDPDEWEECPEPEH. Residues 23–45 traverse the membrane as a helical segment; that stretch reads FLVFSGFTRYMLTFAAIAFVYYF. The Cytoplasmic segment spans residues 46 to 1107; sequence FKLLDDKNKK…IRREMMHNPL (1062 aa). The stretch at 67–124 forms a coiled coil; sequence VESVLAKAGDKLHDVKEQVQQHIPESAEELMREADQYLKEQAHSVQNNVHQFAEQAAN. Positions 478–488 are enriched in low complexity; it reads QLQQNQQQHQQ. 2 disordered regions span residues 478-501 and 673-698; these read QLQQNQQQHQQPSAIDRRRTTADS and HEPETGSNKKKLTPKNPSFEATSRQV. Residues 492–501 are compositionally biased toward basic and acidic residues; it reads IDRRRTTADS. Residues 687–698 show a composition bias toward polar residues; it reads KNPSFEATSRQV. Residues 863-1023 form the VWFA domain; it reads NLIFGIDYTA…LSIIVVGVGD (161 aa).

It belongs to the copine family. May interact (via VWFA domain) with unc-89 (via Ig-like C2-type 1-3) and unc-96 (via C-terminus); cpna-1 binding sites for unc-89 and unc-96 are different. May interact with pat-6. May interact with lim-9 (via LIM domains) and with scpl-1 (via FCP1 homology domain). Expressed in body wall muscles (at protein level).

The protein localises to the basal cell membrane. It localises to the cytoplasm. It is found in the myofibril. The protein resides in the sarcomere. Its subcellular location is the m line. Functionally, involved in the assembly of dense bodies and M lines during body wall muscle development. Acts by recruiting downstream of integrin-associated protein pat-6/actopaxin several dense bodies and M line components including unc-89, lim-9, scpl-1 and unc-96 to integrin-mediated attachment sites. The sequence is that of Copine family protein 1 from Caenorhabditis elegans.